The following is a 262-amino-acid chain: Apolipoprotein A-I (262 aa).

The N-terminal stretch at 1–18 is a signal peptide; the sequence is MKFLALALTILLAAATQA. Residues 32-63 are 3 X approximate tandem repeats; that stretch reads VKVAMMEYMAQVKETGQRSIDLLDDTEFKEYK. 2 consecutive repeat copies span residues 64–85 and 87–107. The interval 64 to 262 is 10 X approximate tandem repeats; the sequence is VQLSQSLDNL…YETISQAMKA (199 aa). One copy of the 3; half-length repeat lies at 108–118; it reads KDVEDVRTQLE. 5 consecutive repeat copies span residues 119 to 140, 141 to 162, 163 to 184, 185 to 206, and 207 to 228. One copy of the 9; half-length repeat lies at 229–239; sequence PLTNDFKGQVG. Residues 240 to 262 form repeat 10; it reads PAAEQAKEKLMDFYETISQAMKA.

This sequence belongs to the apolipoprotein A1/A4/E family.

The protein localises to the secreted. Functionally, participates in the reverse transport of cholesterol from tissues to the liver for excretion by promoting cholesterol efflux from tissues and by acting as a cofactor for the lecithin cholesterol acyltransferase (LCAT). In Salmo trutta (Brown trout), this protein is Apolipoprotein A-I (apoa1).